The chain runs to 27 residues: Toxin Bcg III 21.00 (27 aa).

It is found in the secreted. The protein resides in the nematocyst. Functionally, possible voltage-gated potassium channel (Kv) blocker. The polypeptide is Toxin Bcg III 21.00 (Bunodosoma cangicum (Sea anemone)).